The sequence spans 655 residues: Chaperone protein DnaK 3 (655 aa).

At Thr197 the chain carries Phosphothreonine; by autocatalysis.

This sequence belongs to the heat shock protein 70 family.

Functionally, acts as a chaperone. This is Chaperone protein DnaK 3 from Synechococcus sp. (strain ATCC 27144 / PCC 6301 / SAUG 1402/1) (Anacystis nidulans).